The chain runs to 146 residues: Protein US8.5 (146 aa).

Residues 63 to 93 are disordered; that stretch reads LIAIADARGDPPETLPPGAGGAAPACRRPPR. Over residues 84–93 the composition is skewed to low complexity; sequence AAPACRRPPR.

It belongs to the HHV-1 US8.5 protein family. Phosphorylated.

It localises to the host nucleus. The protein resides in the host nucleolus. The chain is Protein US8.5 from Human herpesvirus 2 (strain HG52) (HHV-2).